Here is a 267-residue protein sequence, read N- to C-terminus: Staphylococcal secretory antigen ssaA2 (267 aa).

A signal peptide spans 1–27 (MKKIATATIATAGFATIAIASGNQAHA). A run of 7 repeats spans residues 83–85 (YNN), 86–88 (YNN), 89–91 (YNN), 95–97 (YNN), 101–103 (YNN), 104–106 (YSN), and 113–115 (YNN). A 7 X 3 AA repeats of Y-[NS]-N region spans residues 83 to 115 (YNNYNNYNNGYSYNNYSRYNNYSNNNQSYNYNN). The region spanning 146-267 (MAPSSNGRSI…SQAAGYNFIH (122 aa)) is the Peptidase C51 domain.

The protein resides in the secreted. Its function is as follows. Not known; immunogenic protein. This Staphylococcus aureus (strain NCTC 8325 / PS 47) protein is Staphylococcal secretory antigen ssaA2 (ssaA2).